The primary structure comprises 504 residues: Cytochrome P450 2D9 (504 aa).

Residue Ser-249 is modified to Phosphoserine. Cys-446 provides a ligand contact to heme.

This sequence belongs to the cytochrome P450 family. The cofactor is heme.

The protein resides in the endoplasmic reticulum membrane. It localises to the microsome membrane. It carries out the reaction an organic molecule + reduced [NADPH--hemoprotein reductase] + O2 = an alcohol + oxidized [NADPH--hemoprotein reductase] + H2O + H(+). Cytochromes P450 are a group of heme-thiolate monooxygenases. In liver microsomes, this enzyme is involved in an NADPH-dependent electron transport pathway. It oxidizes a variety of structurally unrelated compounds, including steroids, fatty acids, and xenobiotics. The chain is Cytochrome P450 2D9 (Cyp2d9) from Mus musculus (Mouse).